A 168-amino-acid polypeptide reads, in one-letter code: 3-isopropylmalate dehydratase small subunit (168 aa).

It belongs to the LeuD family. LeuD type 2 subfamily. In terms of assembly, heterodimer of LeuC and LeuD.

It catalyses the reaction (2R,3S)-3-isopropylmalate = (2S)-2-isopropylmalate. It participates in amino-acid biosynthesis; L-leucine biosynthesis; L-leucine from 3-methyl-2-oxobutanoate: step 2/4. In terms of biological role, catalyzes the isomerization between 2-isopropylmalate and 3-isopropylmalate, via the formation of 2-isopropylmaleate. The sequence is that of 3-isopropylmalate dehydratase small subunit (leuD) from Sulfurisphaera tokodaii (strain DSM 16993 / JCM 10545 / NBRC 100140 / 7) (Sulfolobus tokodaii).